The sequence spans 353 residues: MAKDKFVRTVLGDVPAESIGITDCHDHLIKNGGPEMHEHPDFLMIDVEAAKKEVQEYVDHGGKTIVTMDPPNVGRDVYRMLEIAEAFKGKANIVMSTGFHKAAFYDKYSSWLACVPTDDIVKMMVAEVEEGMDEYNYNGPVVKRSKAKAGIIKAGTGYAAIDRLELKALEVAARTSITTGCPILVHTQLGTMALEVAQHLIGFGANPRKIQLSHLNKNPDRYYYEKIIKETGVTICFDGPDRVKYYPDSLLADHIKYLVDKGLQKHITLSLDAGRILYQRNYGLTKGKETFGLSYLFERFIPLLKQVGVSQEAIDDILINNPREILAFDEPRVYDASKVSSEVVQLKKDLKLL.

Residues His-25, His-27, Lys-153, His-186, and His-214 each coordinate Zn(2+). Lys-153 bears the N6-carboxylysine mark. 244–245 is a binding site for substrate; it reads KY. A Zn(2+)-binding site is contributed by Asp-272. Residue 275–278 participates in substrate binding; that stretch reads RILY.

This sequence belongs to the metallo-dependent hydrolases superfamily. Phosphotriesterase family. Zn(2+) is required as a cofactor.

It carries out the reaction a 1,4-lactone + H2O = a 4-hydroxyacid + H(+). The catalysed reaction is D-xylono-1,4-lactone 5-phosphate + H2O = 5-phospho-D-xylonate + H(+). The enzyme catalyses L-arabino-1,4-lactone 5-phosphate + H2O = 5-phospho-L-arabinonate + H(+). Functionally, catalyzes the hydrolysis of D-xylono-1,4-lactone-5-phosphate and L-arabino-1,4-lactone-5-phosphate. Also able to hydrolyze carboxy 1,4-lactones. The chain is Phospho-furanose lactonase from Mycoplasmopsis agalactiae (strain NCTC 10123 / CIP 59.7 / PG2) (Mycoplasma agalactiae).